Consider the following 276-residue polypeptide: MPELPEVEVTRRGIEPFVAGRRVERVDVRTAMLRWPVPAGFAEMLRSREVLRVERRGKYLLFEVDAGWFIVHLGMTGTLRVLPNDAPPPAPAKHDHVDWIFDEFVLRFRDPRRFGAVLWHPRDAGDVHAHPLLASLGVEPFSAAFSGALLFGRTRGRTVSVKQALLAGDIVVGVGNIYASESLFRAGIRPTTAAGRVSLPRYERLADAVRATLADAIERGGSTLRDFVGSNGESGYFQLDCFVYDRAGEPCRVCGAPIRQIVQGQRSTYFCPNCQR.

The active-site Schiff-base intermediate with DNA is the proline 2. The active-site Proton donor is glutamate 3. Catalysis depends on lysine 58, which acts as the Proton donor; for beta-elimination activity. Histidine 94, arginine 112, and arginine 157 together coordinate DNA. The FPG-type zinc finger occupies 242-276; sequence FVYDRAGEPCRVCGAPIRQIVQGQRSTYFCPNCQR. Residue arginine 266 is the Proton donor; for delta-elimination activity of the active site.

This sequence belongs to the FPG family. In terms of assembly, monomer. Zn(2+) serves as cofactor.

The catalysed reaction is Hydrolysis of DNA containing ring-opened 7-methylguanine residues, releasing 2,6-diamino-4-hydroxy-5-(N-methyl)formamidopyrimidine.. The enzyme catalyses 2'-deoxyribonucleotide-(2'-deoxyribose 5'-phosphate)-2'-deoxyribonucleotide-DNA = a 3'-end 2'-deoxyribonucleotide-(2,3-dehydro-2,3-deoxyribose 5'-phosphate)-DNA + a 5'-end 5'-phospho-2'-deoxyribonucleoside-DNA + H(+). Its function is as follows. Involved in base excision repair of DNA damaged by oxidation or by mutagenic agents. Acts as a DNA glycosylase that recognizes and removes damaged bases. Has a preference for oxidized purines, such as 7,8-dihydro-8-oxoguanine (8-oxoG). Has AP (apurinic/apyrimidinic) lyase activity and introduces nicks in the DNA strand. Cleaves the DNA backbone by beta-delta elimination to generate a single-strand break at the site of the removed base with both 3'- and 5'-phosphates. The protein is Formamidopyrimidine-DNA glycosylase of Burkholderia pseudomallei (strain 1710b).